The following is a 1241-amino-acid chain: ATP-dependent helicase/nuclease subunit A (1241 aa).

A UvrD-like helicase ATP-binding domain is found at 12-485 (SQWTDDQWKA…IDLAKNFRSR (474 aa)). ATP is bound at residue 33–40 (AAAGSGKT). The UvrD-like helicase C-terminal domain occupies 505–805 (GEIDYDADAE…RIMTIHKSKG (301 aa)).

The protein belongs to the helicase family. AddA subfamily. In terms of assembly, heterodimer of AddA and AddB/RexB. Mg(2+) serves as cofactor.

It catalyses the reaction Couples ATP hydrolysis with the unwinding of duplex DNA by translocating in the 3'-5' direction.. The enzyme catalyses ATP + H2O = ADP + phosphate + H(+). In terms of biological role, the heterodimer acts as both an ATP-dependent DNA helicase and an ATP-dependent, dual-direction single-stranded exonuclease. Recognizes the chi site generating a DNA molecule suitable for the initiation of homologous recombination. The AddA nuclease domain is required for chi fragment generation; this subunit has the helicase and 3' -&gt; 5' nuclease activities. This Bacillus cereus (strain B4264) protein is ATP-dependent helicase/nuclease subunit A.